Reading from the N-terminus, the 138-residue chain is Large ribosomal subunit protein eL32 (138 aa).

It belongs to the eukaryotic ribosomal protein eL32 family.

The protein is Large ribosomal subunit protein eL32 (rpl32e) of Saccharolobus solfataricus (strain ATCC 35092 / DSM 1617 / JCM 11322 / P2) (Sulfolobus solfataricus).